We begin with the raw amino-acid sequence, 392 residues long: MLLMLSQWLQGLSPEFGFLRVFQYLTMRAVMAALTALVIGLLAGPRLIRMLTSLKIGQPVRGYGMETHLAKSGTPTMGGALILLSIAVSTLLWFDLSNRFVWIVLLVTLGFGTIGWVDDWRKVVNKDPEGMRSGEKYFWQSVIGLLAALYLVFCISENSNAQVFELFVTWVQSGFALDLPPKAGLLVPFFKEVSYPLGVLGFVIMTYLVIVGASNAVNLTDGLDGLAIMPVIMVGSALGIFAYVTGNAGYAKYLLFPHIPGSGELLVYCAAMAGAGLAFLWFNAHPAQVFMGDVGALALGASLGTIAVIVRQEIVLAIMGGIFVVEALSVMLQVTWFKFTKKRYGQGRRLLKMAPLHHHFEKSGWKETQVVIRFWIITMLLCLLGLSTLKLR.

A run of 11 helical transmembrane segments spans residues 24 to 44 (YLTM…LLAG), 76 to 96 (TMGG…WFDL), 100 to 120 (FVWI…VDDW), 137 to 157 (YFWQ…CISE), 170 to 190 (WVQS…VPFF), 193 to 213 (VSYP…IVGA), 225 to 245 (GLAI…AYVT), 262 to 282 (SGEL…FLWF), 289 to 309 (VFMG…IAVI), 314 to 334 (IVLA…MLQV), and 369 to 389 (QVVI…LSTL).

Belongs to the glycosyltransferase 4 family. MraY subfamily. The cofactor is Mg(2+).

The protein resides in the cell inner membrane. It catalyses the reaction UDP-N-acetyl-alpha-D-muramoyl-L-alanyl-gamma-D-glutamyl-meso-2,6-diaminopimeloyl-D-alanyl-D-alanine + di-trans,octa-cis-undecaprenyl phosphate = di-trans,octa-cis-undecaprenyl diphospho-N-acetyl-alpha-D-muramoyl-L-alanyl-D-glutamyl-meso-2,6-diaminopimeloyl-D-alanyl-D-alanine + UMP. It functions in the pathway cell wall biogenesis; peptidoglycan biosynthesis. Catalyzes the initial step of the lipid cycle reactions in the biosynthesis of the cell wall peptidoglycan: transfers peptidoglycan precursor phospho-MurNAc-pentapeptide from UDP-MurNAc-pentapeptide onto the lipid carrier undecaprenyl phosphate, yielding undecaprenyl-pyrophosphoryl-MurNAc-pentapeptide, known as lipid I. This is Phospho-N-acetylmuramoyl-pentapeptide-transferase from Delftia acidovorans (strain DSM 14801 / SPH-1).